The primary structure comprises 409 residues: Tryptophan synthase beta chain (409 aa).

Lys95 bears the N6-(pyridoxal phosphate)lysine mark.

Belongs to the TrpB family. As to quaternary structure, tetramer of two alpha and two beta chains. Requires pyridoxal 5'-phosphate as cofactor.

The catalysed reaction is (1S,2R)-1-C-(indol-3-yl)glycerol 3-phosphate + L-serine = D-glyceraldehyde 3-phosphate + L-tryptophan + H2O. The protein operates within amino-acid biosynthesis; L-tryptophan biosynthesis; L-tryptophan from chorismate: step 5/5. In terms of biological role, the beta subunit is responsible for the synthesis of L-tryptophan from indole and L-serine. This chain is Tryptophan synthase beta chain, found in Pseudomonas syringae pv. tomato (strain ATCC BAA-871 / DC3000).